Here is an 872-residue protein sequence, read N- to C-terminus: N-acetyltransferase eso1 (872 aa).

Positions 1 to 591 are polymerase type-Y; it reads MELGKSKFSW…KQVKPKTYGR (591 aa). The UmuC domain maps to 29 to 285; it reads VAHIDQDAFY…LKITDIRMLG (257 aa). Residues 533 to 567 form a UBZ3-type zinc finger; it reads SADETYTCEECEQKITLSERNEHEDYHIALSISRK. Residues C540, C543, H555, and H559 each coordinate Zn(2+). The disordered stretch occupies residues 569–602; the sequence is RYNNLVPPSHDKPKQVKPKTYGRKTGSKHYAPLS. The segment covering 583–595 has biased composition (basic residues); the sequence is QVKPKTYGRKTGS. An acetyltransferase region spans residues 592–872; that stretch reads KTGSKHYAPL…KSLRYAVYES (281 aa). Residues 653–677 form a CCHH-type zinc finger; it reads VTCSECSMEYNSTSEEDILLHSRFH.

It in the C-terminal section; belongs to the acetyltransferase family. ECO subfamily. The protein in the N-terminal section; belongs to the DNA polymerase type-Y family. Interacts with pds5.

The protein localises to the nucleus. Its function is as follows. Probable acetyltransferase required for the establishment of sister chromatid cohesion and couple the processes of cohesion and DNA replication to ensure that only sister chromatids become paired together. In contrast to the structural cohesins, the deposition and establishment factors are required only during S phase. The relevance of acetyltransferase function remains unclear. The chain is N-acetyltransferase eso1 (eso1) from Schizosaccharomyces pombe (strain 972 / ATCC 24843) (Fission yeast).